Here is a 507-residue protein sequence, read N- to C-terminus: tRNA (guanine(6)-N(2))-methyltransferase THUMP3 (507 aa).

A THUMP domain is found at Lys165–Leu285.

Belongs to the methyltransferase superfamily. Part of the heterodimeric THUMPD3-TRM112 methyltransferase complex; this complex forms an active tRNA methyltransferase, where TRMT112 acts as an activator of the catalytic subunit THUMPD3.

The protein resides in the cytoplasm. The catalysed reaction is guanosine(6) in tRNA + S-adenosyl-L-methionine = N(2)-methylguanosine(6) in tRNA + S-adenosyl-L-homocysteine + H(+). The enzyme catalyses guanosine(7) in tRNA + S-adenosyl-L-methionine = N(2)-methylguanosine(7) in tRNA + S-adenosyl-L-homocysteine + H(+). Catalytic subunit of the THUMPD3-TRM112 methyltransferase complex, that specifically mediates the S-adenosyl-L-methionine-dependent N(2)-methylation of guanosine nucleotide at position 6 (m2G6) in tRNAs. This is one of the major tRNA (guanine-N(2))-methyltransferases. Also catalyzes the S-adenosyl-L-methionine-dependent N(2)-methylation of guanosine nucleotide at position 7 of tRNA(Trp). The sequence is that of tRNA (guanine(6)-N(2))-methyltransferase THUMP3 from Homo sapiens (Human).